Consider the following 298-residue polypeptide: Protease HtpX homolog (298 aa).

The next 2 membrane-spanning stretches (helical) occupy residues 14–34 (ILVM…IGYL) and 39–59 (VIGG…VIIG). Residue His144 participates in Zn(2+) binding. Glu145 is a catalytic residue. Residue His148 coordinates Zn(2+). Transmembrane regions (helical) follow at residues 159 to 179 (IALA…NFWW) and 195 to 215 (IFAI…ATIA). Glu224 contacts Zn(2+).

Belongs to the peptidase M48B family. Requires Zn(2+) as cofactor.

Its subcellular location is the cell membrane. In Limosilactobacillus reuteri (strain DSM 20016) (Lactobacillus reuteri), this protein is Protease HtpX homolog.